We begin with the raw amino-acid sequence, 571 residues long: Urease subunit alpha (571 aa).

In terms of domain architecture, Urease spans 129 to 571; sequence GGIDTHIHFI…LPMAQRYFLF (443 aa). Ni(2+) is bound by residues H134, H136, and K217. Residue K217 is modified to N6-carboxylysine. H219 serves as a coordination point for substrate. Residues H246 and H272 each contribute to the Ni(2+) site. The Proton donor role is filled by H320. D360 is a binding site for Ni(2+).

It belongs to the metallo-dependent hydrolases superfamily. Urease alpha subunit family. Heterotrimer of UreA (gamma), UreB (beta) and UreC (alpha) subunits. Three heterotrimers associate to form the active enzyme. Ni cation is required as a cofactor. Carboxylation allows a single lysine to coordinate two nickel ions.

Its subcellular location is the cytoplasm. It carries out the reaction urea + 2 H2O + H(+) = hydrogencarbonate + 2 NH4(+). It participates in nitrogen metabolism; urea degradation; CO(2) and NH(3) from urea (urease route): step 1/1. The chain is Urease subunit alpha from Cupriavidus pinatubonensis (strain JMP 134 / LMG 1197) (Cupriavidus necator (strain JMP 134)).